A 132-amino-acid chain; its full sequence is DNA-directed RNA polymerase subunit Rpo8 (132 aa).

The protein belongs to the archaeal Rpo8 RNA polymerase subunit family. Part of the 13-subunit RNA polymerase complex.

Its subcellular location is the cytoplasm. It catalyses the reaction RNA(n) + a ribonucleoside 5'-triphosphate = RNA(n+1) + diphosphate. Functionally, DNA-dependent RNA polymerase (RNAP) catalyzes the transcription of DNA into RNA using the four ribonucleoside triphosphates as substrates. In Saccharolobus solfataricus (strain ATCC 35092 / DSM 1617 / JCM 11322 / P2) (Sulfolobus solfataricus), this protein is DNA-directed RNA polymerase subunit Rpo8.